The chain runs to 550 residues: Hydroxylamine reductase (550 aa).

[2Fe-2S] cluster contacts are provided by cysteine 3, cysteine 6, cysteine 18, and cysteine 25. Residues histidine 249, glutamate 273, cysteine 317, cysteine 405, cysteine 433, cysteine 458, glutamate 492, and lysine 494 each coordinate hybrid [4Fe-2O-2S] cluster. Position 405 is a cysteine persulfide (cysteine 405).

Belongs to the HCP family. It depends on [2Fe-2S] cluster as a cofactor. Hybrid [4Fe-2O-2S] cluster is required as a cofactor.

It is found in the cytoplasm. The catalysed reaction is A + NH4(+) + H2O = hydroxylamine + AH2 + H(+). Functionally, catalyzes the reduction of hydroxylamine to form NH(3) and H(2)O. This chain is Hydroxylamine reductase, found in Salmonella typhi.